The primary structure comprises 780 residues: Kazrin (780 aa).

Residues 79 to 261 (AQVLLREEVV…LATLTKDVPK (183 aa)) are a coiled coil. Residues 295–430 (QQTLYHSHPP…TRHSLSLSEG (136 aa)) are disordered. Ser357, Ser372, and Ser392 each carry phosphoserine. The span at 416 to 427 (SQCSPTRHSLSL) shows a compositional bias: polar residues. SAM domains lie at 451-516 (WKAG…YRDA), 529-593 (DHHW…LYQV), and 617-684 (WTNQ…STVF). The disordered stretch occupies residues 692–780 (IRESERFGTP…EYSSLEVTNV (89 aa)). The segment covering 760–771 (LQGRPEQCRLEE) has biased composition (basic and acidic residues).

Belongs to the kazrin family.

It is found in the cell junction. The protein resides in the nucleus. The protein localises to the cytoplasm. Its subcellular location is the cytoskeleton. Functionally, component of the cornified envelope of keratinocytes. May be involved in the interplay between adherens junctions and desmosomes. The function in the nucleus is not known. The polypeptide is Kazrin (Kazn) (Rattus norvegicus (Rat)).